A 160-amino-acid polypeptide reads, in one-letter code: Putative antiporter subunit mnhE2 (160 aa).

Helical transmembrane passes span phenylalanine 23–histidine 43, isoleucine 55–serine 75, and serine 100–isoleucine 120.

This sequence belongs to the CPA3 antiporters (TC 2.A.63) subunit E family. In terms of assembly, may form a heterooligomeric complex that consists of seven subunits: mnhA2, mnhB2, mnhC2, mnhD2, mnhE2, mnhF2 and mnhG2.

Its subcellular location is the cell membrane. This is Putative antiporter subunit mnhE2 (mnhE2) from Staphylococcus epidermidis (strain ATCC 35984 / DSM 28319 / BCRC 17069 / CCUG 31568 / BM 3577 / RP62A).